The following is a 398-amino-acid chain: Deoxyguanosinetriphosphate triphosphohydrolase-like protein (398 aa).

Residues 68–215 (RLTHTLEVAQ…AAISDDIAYD (148 aa)) enclose the HD domain.

It belongs to the dGTPase family. Type 2 subfamily.

The protein is Deoxyguanosinetriphosphate triphosphohydrolase-like protein of Azorhizobium caulinodans (strain ATCC 43989 / DSM 5975 / JCM 20966 / LMG 6465 / NBRC 14845 / NCIMB 13405 / ORS 571).